Here is a 318-residue protein sequence, read N- to C-terminus: Cell growth regulator with EF hand domain protein 1 (318 aa).

A signal peptide spans 1 to 19; the sequence is MLPLTMTVLILLLLPTGQA. EF-hand domains are found at residues 69–104 and 114–149; these read SREQ…ALAP and PVIL…ALRH. 9 residues coordinate Ca(2+): aspartate 82, aspartate 84, serine 86, glutamine 88, glutamate 93, aspartate 127, asparagine 129, aspartate 131, and glutamate 138. The segment at 177 to 318 is disordered; the sequence is LRQETQEAPG…HIVQVENDEI (142 aa). Basic and acidic residues-rich tracts occupy residues 186–202 and 223–233; these read GPRE…RESL and GEAEGQAEAKG. Tandem repeats lie at residues 219–235, 236–252, and 253–269. The tract at residues 219-286 is 4 X 17 AA approximate tandem repeats of P-G-P-R-G-E-A-G-G-Q-A-E-A-[KR]-G-D-A; the sequence is PGPRGEAEGQ…GGQAEARENG (68 aa). Positions 235–272 are enriched in low complexity; the sequence is APGPRGEAGGQAEAEGDAPGPRGEAGGQAEAEGDAPGP. The stretch at 270–286 is one 4; approximate repeat; it reads PGPRGEAGGQAEARENG. Over residues 281 to 293 the composition is skewed to basic and acidic residues; sequence EARENGEEAKELP.

Post-translationally, probably digested extracellularly by an unknown serine protease generating extremely hydrophobic bioactive peptides.

Its subcellular location is the secreted. Mediates cell-cell adhesion in a calcium-dependent manner. Able to inhibit growth in several cell lines. In Homo sapiens (Human), this protein is Cell growth regulator with EF hand domain protein 1.